Consider the following 163-residue polypeptide: Photosystem II extrinsic protein V (163 aa).

An N-terminal signal peptide occupies residues 1–26 (MLKKCVWLAVALCLCLWQFTMGTALA). Positions 67 and 118 each coordinate heme c.

The protein belongs to the cytochrome c family. PsbV subfamily. PSII is composed of 1 copy each of membrane proteins PsbA, PsbB, PsbC, PsbD, PsbE, PsbF, PsbH, PsbI, PsbJ, PsbK, PsbL, PsbM, PsbT, PsbX, PsbY, PsbZ, Psb30/Ycf12, peripheral proteins PsbO, CyanoQ (PsbQ), PsbU, PsbV and a large number of cofactors. It forms dimeric complexes. Heme c is required as a cofactor.

It is found in the cellular thylakoid membrane. Functionally, one of the extrinsic, lumenal subunits of photosystem II (PSII). PSII is a light-driven water plastoquinone oxidoreductase, using light energy to abstract electrons from H(2)O, generating a proton gradient subsequently used for ATP formation. The extrinsic proteins stabilize the structure of photosystem II oxygen-evolving complex (OEC), the ion environment of oxygen evolution and protect the OEC against heat-induced inactivation. Low-potential cytochrome c that plays a role in the OEC of PSII. The chain is Photosystem II extrinsic protein V from Thermosynechococcus vestitus (strain NIES-2133 / IAM M-273 / BP-1).